We begin with the raw amino-acid sequence, 179 residues long: UPF0227 protein VIBHAR_01524 (179 aa).

It belongs to the UPF0227 family.

The sequence is that of UPF0227 protein VIBHAR_01524 from Vibrio campbellii (strain ATCC BAA-1116).